Reading from the N-terminus, the 325-residue chain is Tetraacyldisaccharide 4'-kinase (325 aa).

Serine 54–threonine 61 serves as a coordination point for ATP.

It belongs to the LpxK family.

The enzyme catalyses a lipid A disaccharide + ATP = a lipid IVA + ADP + H(+). Its pathway is glycolipid biosynthesis; lipid IV(A) biosynthesis; lipid IV(A) from (3R)-3-hydroxytetradecanoyl-[acyl-carrier-protein] and UDP-N-acetyl-alpha-D-glucosamine: step 6/6. Its function is as follows. Transfers the gamma-phosphate of ATP to the 4'-position of a tetraacyldisaccharide 1-phosphate intermediate (termed DS-1-P) to form tetraacyldisaccharide 1,4'-bis-phosphate (lipid IVA). The sequence is that of Tetraacyldisaccharide 4'-kinase from Rickettsia akari (strain Hartford).